A 259-amino-acid chain; its full sequence is Flap endonuclease Xni (259 aa).

Aspartate 109 serves as a coordination point for Mg(2+). Residues 165-255 enclose the 5'-3' exonuclease domain; sequence VKPQQLSDYW…FNLQDLRFTA (91 aa). Positions 176, 187, and 190 each coordinate K(+). The interval 189 to 194 is interaction with DNA; sequence GIGPKA.

Belongs to the Xni family. Requires Mg(2+) as cofactor. The cofactor is K(+).

Its function is as follows. Has flap endonuclease activity. During DNA replication, flap endonucleases cleave the 5'-overhanging flap structure that is generated by displacement synthesis when DNA polymerase encounters the 5'-end of a downstream Okazaki fragment. This chain is Flap endonuclease Xni, found in Vibrio vulnificus (strain CMCP6).